We begin with the raw amino-acid sequence, 362 residues long: Methylthioribose-1-phosphate isomerase (362 aa).

The active-site Proton donor is Asp-252.

It belongs to the eIF-2B alpha/beta/delta subunits family. MtnA subfamily.

The protein resides in the cytoplasm. Its subcellular location is the nucleus. The enzyme catalyses 5-(methylsulfanyl)-alpha-D-ribose 1-phosphate = 5-(methylsulfanyl)-D-ribulose 1-phosphate. It functions in the pathway amino-acid biosynthesis; L-methionine biosynthesis via salvage pathway; L-methionine from S-methyl-5-thio-alpha-D-ribose 1-phosphate: step 1/6. Functionally, catalyzes the interconversion of methylthioribose-1-phosphate (MTR-1-P) into methylthioribulose-1-phosphate (MTRu-1-P). The chain is Methylthioribose-1-phosphate isomerase from Drosophila virilis (Fruit fly).